Here is an 82-residue protein sequence, read N- to C-terminus: RNA-binding protein Hfq (82 aa).

Residues 10–70 (DTFLNHVRKN…ISTIMPAQPV (61 aa)) enclose the Sm domain.

This sequence belongs to the Hfq family. In terms of assembly, homohexamer.

RNA chaperone that binds small regulatory RNA (sRNAs) and mRNAs to facilitate mRNA translational regulation in response to envelope stress, environmental stress and changes in metabolite concentrations. Also binds with high specificity to tRNAs. This is RNA-binding protein Hfq from Parvibaculum lavamentivorans (strain DS-1 / DSM 13023 / NCIMB 13966).